The sequence spans 163 residues: Ribosome maturation factor RimP (163 aa).

It belongs to the RimP family.

It localises to the cytoplasm. Functionally, required for maturation of 30S ribosomal subunits. This is Ribosome maturation factor RimP from Streptococcus thermophilus (strain CNRZ 1066).